Here is a 448-residue protein sequence, read N- to C-terminus: Integrator complex subunit 15 (448 aa).

This sequence belongs to the Integrator subunit 15 family. In terms of assembly, component of the Integrator complex, composed of core subunits INTS1, INTS2, INTS3, INTS4, INTS5, INTS6, INTS7, INTS8, INTS9/RC74, INTS10, INTS11/CPSF3L, INTS12, INTS13, INTS14 and INTS15. The core complex associates with protein phosphatase 2A subunits PPP2CA and PPP2R1A, to form the Integrator-PP2A (INTAC) complex. INTS15 is part of the tail subcomplex, composed of INTS10, INTS13, INTS14 and INTS15.

The protein resides in the nucleus. It is found in the chromosome. In terms of biological role, component of the integrator complex, a multiprotein complex that terminates RNA polymerase II (Pol II) transcription in the promoter-proximal region of genes. The integrator complex provides a quality checkpoint during transcription elongation by driving premature transcription termination of transcripts that are unfavorably configured for transcriptional elongation: the complex terminates transcription by (1) catalyzing dephosphorylation of the C-terminal domain (CTD) of Pol II subunit POLR2A/RPB1 and SUPT5H/SPT5, (2) degrading the exiting nascent RNA transcript via endonuclease activity and (3) promoting the release of Pol II from bound DNA. The integrator complex is also involved in terminating the synthesis of non-coding Pol II transcripts, such as enhancer RNAs (eRNAs), small nuclear RNAs (snRNAs), telomerase RNAs and long non-coding RNAs (lncRNAs). INTS15 is part of the integrator tail module that acts as a platform for the recruitment of transcription factors at promoters. Within the integrator complex, INTS15 is required to bridge different integrator modules. The chain is Integrator complex subunit 15 from Mus musculus (Mouse).